Consider the following 332-residue polypeptide: tRNA (cytosine(38)-C(5))-methyltransferase (332 aa).

One can recognise an SAM-dependent MTase C5-type domain in the interval 3–332; the sequence is HKILELYSGI…ISELLKILFE (330 aa). S-adenosyl-L-homocysteine contacts are provided by residues 12–14, 33–34, 55–56, and Ser-75; these read IGG, DI, and NI. Residue Cys-78 is part of the active site. Residues Gln-79, Ser-97, and 316 to 317 each bind S-adenosyl-L-homocysteine; that span reads NS.

It belongs to the class I-like SAM-binding methyltransferase superfamily. C5-methyltransferase family.

The protein localises to the cytoplasm. The protein resides in the nucleus. The catalysed reaction is cytidine(38) in tRNA + S-adenosyl-L-methionine = 5-methylcytidine(38) in tRNA + S-adenosyl-L-homocysteine + H(+). It catalyses the reaction a 2'-deoxycytidine in DNA + S-adenosyl-L-methionine = a 5-methyl-2'-deoxycytidine in DNA + S-adenosyl-L-homocysteine + H(+). Specifically methylates cytosine 38 in the anticodon loop of tRNA(Asp). Also has DNA (cytosine-5)-methyltransferase activity. Shows affinity for both tRNA(Asp) and DNA substrates. This Spodoptera frugiperda (Fall armyworm) protein is tRNA (cytosine(38)-C(5))-methyltransferase.